A 78-amino-acid polypeptide reads, in one-letter code: Hainantoxin-XX.2 (78 aa).

An N-terminal signal peptide occupies residues 1-23 (MKSATLLALSYLLIALYFLICEA). The propeptide occupies 24–47 (EHSRYEEHEILEENMGDVVNLEQR). Disulfide bonds link Cys-49/Cys-62, Cys-56/Cys-66, and Cys-61/Cys-77.

It belongs to the hainantoxin family. 20 subfamily. Expressed by the venom gland.

It is found in the secreted. In terms of biological role, moderately inhibits Kv1.1/KCNA1 and Kv1.2/KCNA2 and weakly inhibits Kv1.3/KCNA3, and Kv2.1/KCNB1 voltage-gated potassium channels. This is Hainantoxin-XX.2 from Cyriopagopus hainanus (Chinese bird spider).